Here is a 430-residue protein sequence, read N- to C-terminus: Histidine--tRNA ligase (430 aa).

The protein belongs to the class-II aminoacyl-tRNA synthetase family. As to quaternary structure, homodimer.

It is found in the cytoplasm. It catalyses the reaction tRNA(His) + L-histidine + ATP = L-histidyl-tRNA(His) + AMP + diphosphate + H(+). This chain is Histidine--tRNA ligase, found in Chlorobium luteolum (strain DSM 273 / BCRC 81028 / 2530) (Pelodictyon luteolum).